The chain runs to 286 residues: S-methyl-5'-thioadenosine phosphorylase (286 aa).

Residues Ser11, Arg53–His54, and Ser86–Ala87 contribute to the phosphate site. A substrate-binding site is contributed by Met185. Thr186 serves as a coordination point for phosphate. Asp209 to Asp211 contributes to the substrate binding site.

This sequence belongs to the PNP/MTAP phosphorylase family. MTAP subfamily. Homohexamer. Dimer of a homotrimer.

It carries out the reaction S-methyl-5'-thioadenosine + phosphate = 5-(methylsulfanyl)-alpha-D-ribose 1-phosphate + adenine. The protein operates within amino-acid biosynthesis; L-methionine biosynthesis via salvage pathway; S-methyl-5-thio-alpha-D-ribose 1-phosphate from S-methyl-5'-thioadenosine (phosphorylase route): step 1/1. In terms of biological role, catalyzes the reversible phosphorylation of S-methyl-5'-thioadenosine (MTA) to adenine and 5-methylthioribose-1-phosphate. Involved in the breakdown of MTA, a major by-product of polyamine biosynthesis. Responsible for the first step in the methionine salvage pathway after MTA has been generated from S-adenosylmethionine. Has broad substrate specificity with 6-aminopurine nucleosides as preferred substrates. The chain is S-methyl-5'-thioadenosine phosphorylase from Geobacter sulfurreducens (strain ATCC 51573 / DSM 12127 / PCA).